The following is a 734-amino-acid chain: Predicted GPI-anchored protein 49 (734 aa).

The first 16 residues, 1–16, serve as a signal peptide directing secretion; that stretch reads MNYITSLLLLSSNTFL. Residues N27, N56, N68, and N71 are each glycosylated (N-linked (GlcNAc...) asparagine). Residues 78–145 form a disordered region; the sequence is DNSDTDIDDS…NESDTQNEND (68 aa). Over residues 87–98 the composition is skewed to low complexity; that stretch reads SSSNSEDVSSND. Residues N105, N118, N136, and N180 are each glycosylated (N-linked (GlcNAc...) asparagine). A compositionally biased stretch (acidic residues) spans 110-129; sequence FSDESDEGNDSDDNGDEVEN. The span at 130-141 shows a compositional bias: polar residues; the sequence is MENNQANESDTQ. Disordered stretches follow at residues 216–262 and 331–360; these read SPKS…LKSK and DANP…RLPT. Residues 228–259 are compositionally biased toward basic residues; the sequence is SRKKTLKSKSKSKSSKLKHKSRKSHKRRPKLL. N388 and N427 each carry an N-linked (GlcNAc...) asparagine glycan. The disordered stretch occupies residues 447 to 479; sequence PPRYSNHHSEFTVERPPRPSRTKKRPRIKAKKT. Residues 453–463 are compositionally biased toward basic and acidic residues; that stretch reads HHSEFTVERPP. Positions 464–479 are enriched in basic residues; the sequence is RPSRTKKRPRIKAKKT. A glycan (N-linked (GlcNAc...) asparagine) is linked at N517. The interval 582–653 is disordered; the sequence is KPQETKLHSP…STTSTKPNDQ (72 aa). The span at 592–611 shows a compositional bias: low complexity; sequence TSTDTKSSKLMSSSSSNNNK. Polar residues predominate over residues 620–631; the sequence is EYNQTQESTSYN. 2 N-linked (GlcNAc...) asparagine glycosylation sites follow: N622 and N631. The span at 632-650 shows a compositional bias: low complexity; sequence TTKAVPKTSVVSSTTSTKP. A lipid anchor (GPI-anchor amidated serine) is attached at S707. Residues 708 to 734 constitute a propeptide, removed in mature form; the sequence is ASQNLSFSVLGLIILLLLLPGLLIIIM. N-linked (GlcNAc...) asparagine glycosylation occurs at N711.

Its subcellular location is the cell membrane. In Candida albicans (strain SC5314 / ATCC MYA-2876) (Yeast), this protein is Predicted GPI-anchored protein 49 (PGA49).